Consider the following 188-residue polypeptide: Holliday junction branch migration complex subunit RuvA (188 aa).

A domain I region spans residues 1–63; the sequence is MIEIIEGIYK…QEDMTIYGFD (63 aa). Positions 64 to 142 are domain II; sequence SKVKKETFEK…VVEVNEEMLE (79 aa). Residue Glu-142 is a region of interest, flexible linker. Positions 142 to 188 are domain III; sequence EAIEALVSLGYSKTQARNAVSKVLKESPNISNVSKIIKEALKILAKI.

Belongs to the RuvA family. Homotetramer. Forms an RuvA(8)-RuvB(12)-Holliday junction (HJ) complex. HJ DNA is sandwiched between 2 RuvA tetramers; dsDNA enters through RuvA and exits via RuvB. An RuvB hexamer assembles on each DNA strand where it exits the tetramer. Each RuvB hexamer is contacted by two RuvA subunits (via domain III) on 2 adjacent RuvB subunits; this complex drives branch migration. In the full resolvosome a probable DNA-RuvA(4)-RuvB(12)-RuvC(2) complex forms which resolves the HJ.

It is found in the cytoplasm. The RuvA-RuvB-RuvC complex processes Holliday junction (HJ) DNA during genetic recombination and DNA repair, while the RuvA-RuvB complex plays an important role in the rescue of blocked DNA replication forks via replication fork reversal (RFR). RuvA specifically binds to HJ cruciform DNA, conferring on it an open structure. The RuvB hexamer acts as an ATP-dependent pump, pulling dsDNA into and through the RuvAB complex. HJ branch migration allows RuvC to scan DNA until it finds its consensus sequence, where it cleaves and resolves the cruciform DNA. In Fervidobacterium nodosum (strain ATCC 35602 / DSM 5306 / Rt17-B1), this protein is Holliday junction branch migration complex subunit RuvA.